The primary structure comprises 106 residues: Small ribosomal subunit protein bS6 (106 aa).

It belongs to the bacterial ribosomal protein bS6 family.

Functionally, binds together with bS18 to 16S ribosomal RNA. This is Small ribosomal subunit protein bS6 from Cyanothece sp. (strain PCC 7425 / ATCC 29141).